We begin with the raw amino-acid sequence, 443 residues long: ATP-dependent protease ATPase subunit HslU (443 aa).

ATP contacts are provided by residues I18, G60–E65, D256, E321, and R393.

The protein belongs to the ClpX chaperone family. HslU subfamily. In terms of assembly, a double ring-shaped homohexamer of HslV is capped on each side by a ring-shaped HslU homohexamer. The assembly of the HslU/HslV complex is dependent on binding of ATP.

It is found in the cytoplasm. Its function is as follows. ATPase subunit of a proteasome-like degradation complex; this subunit has chaperone activity. The binding of ATP and its subsequent hydrolysis by HslU are essential for unfolding of protein substrates subsequently hydrolyzed by HslV. HslU recognizes the N-terminal part of its protein substrates and unfolds these before they are guided to HslV for hydrolysis. The protein is ATP-dependent protease ATPase subunit HslU of Salmonella agona (strain SL483).